The chain runs to 66 residues: Toxin Boma6b (66 aa).

The LCN-type CS-alpha/beta domain occupies 2-64; the sequence is RDAYIAQNYN…VPIKVEGKCH (63 aa). Disulfide bonds link C12-C63, C16-C36, C22-C46, and C26-C48.

The protein belongs to the long (4 C-C) scorpion toxin superfamily. Sodium channel inhibitor family. Alpha subfamily. As to expression, expressed by the venom gland.

Its subcellular location is the secreted. Functionally, alpha toxins bind voltage-independently at site-3 of sodium channels (Nav) and inhibit the inactivation of the activated channels, thereby blocking neuronal transmission. The chain is Toxin Boma6b from Buthus occitanus mardochei (Moroccan scorpion).